The chain runs to 257 residues: Short chain dehydrogenase helC (257 aa).

An N-terminal signal peptide occupies residues 1–22; that stretch reads MNTAIITGAAQGVGLCIAEALA. Val13 contacts NADP(+). Residue Asn46 is glycosylated (N-linked (GlcNAc...) asparagine). 2 residues coordinate NADP(+): Asp60 and Asn87. Asn110 is a glycosylation site (N-linked (GlcNAc...) asparagine). Residues Tyr154, Lys158, Ile185, and Thr187 each coordinate NADP(+). Tyr154 serves as the catalytic Proton acceptor. The Lowers pKa of active site Tyr role is filled by Lys158.

It belongs to the short-chain dehydrogenases/reductases (SDR) family.

Its pathway is mycotoxin biosynthesis. In terms of biological role, short chain dehydrogenase; part of the gene cluster that mediates the biosynthesis of helvolic acid, an antibacterial nortriterpenoid. Protostadienol synthase helA cyclizes (3S)-oxidosqualene to (17Z)-protosta-17(20),24-dien-3-beta-ol (protostadienol). The synthesis of protostadienol is followed by several steps of monooxygenation, dehydrogenation, and acyl transfer to yield the final helvolic acid. Following the cyclization to the tetracyclic protostadienol by helA, cytochrome P450 monooxygenases helB1-mediated and helB2-mediated oxidation at C-4 and C-16, acyltransferase helD2-dependent acetylation of 16-OH, oxidation of C-21 by cytochrome P450 monooxygenase helB4, and short chain dehydrogenase helC-dependent oxidative decarboxylation yield the fusidane skeleton. This intermediate is further modified in three additional steps mediated by the cytochrome P450 monooxygenase helB3, the acyltransferase helD1, and the 3-ketosteroid 1-dehydrogenase helE to give helvolic acid. Compared with the late stages in the biosynthesis of helvolic acid, enzymes involved in the early stage modifications act in a relatively strict order. The hydroxylation of C-16 by helB1 and subsequent acetylation by helD2 should occur before the helB3-mediated oxidation of C-21. C-4 demethylation in fusidane-type antibiotics proceeds in an unusual manner though it is also achieved by oxidative decarboxylation. The methyl group at C-4 beta position is oxidized by helB1 and subsequently removed by the short chain dehydrogenase helC. This Aspergillus fumigatus (strain ATCC MYA-4609 / CBS 101355 / FGSC A1100 / Af293) (Neosartorya fumigata) protein is Short chain dehydrogenase helC.